The primary structure comprises 569 residues: MATEGGGKEMNEIKTQFTTREGLYKLLPHSEYSRPNRVPFNSQGSNPVRVSFVNLNDQSGNGDRLCFNVGRELYFYIYKGVRKAADLSKPIDKRIYKGTQPTCHDFNHLTATAESVSLLVGFSAGQVQLIDPIKKETSKLFNEERLIDKSRVTCVKWVPGSESLFLVAHSSGNMYLYNVEHTCGTTAPHYQLLKQGESFAVHTCKSKSTRNPLLKWTVGEGALNEFAFSPDGKFLACVSQDGFLRVFNFDSVELHGTMKSYFGGLLCVCWSPDGKYIVTGGEDDLVTVWSFVDCRVIARGHGHKSWVSVVAFDPYTTSVEEGDPMEFSGSDEDFQDLLHFGRDRANSTQSRLSKRNSTDSRPVSVTYRFGSVGQDTQLCLWDLTEDILFPHQPLSRARTHTNVMNATSPPAGSNGNSVTTPGNSVPPPLPRSNSLPHSAVSNAGSKSSVMDGAIASGVSKFATLSLHDRKERHHEKDHKRNHSMGHISSKSSDKLNLVTKTKTDPAKTLGTPLCPRMEDVPLLEPLICKKIAHERLTVLIFLEDCIVTACQEGFICTWGRPGKVVSFNP.

Ala2 is modified (N-acetylalanine). 7 WD repeats span residues 94 to 138, 139 to 210, 211 to 252, 253 to 331, 332 to 426, 427 to 523, and 524 to 559; these read RIYK…KETS, KLFN…KSTR, NPLL…FDSV, ELHG…SGSD, EDFQ…NSVP, PPLP…VPLL, and EPLI…CTWG. Ser357 and Ser360 each carry phosphoserine. Polar residues-rich tracts occupy residues 405–423 and 431–445; these read NATS…TPGN and RSNS…NAGS. A disordered region spans residues 405 to 445; it reads NATSPPAGSNGNSVTTPGNSVPPPLPRSNSLPHSAVSNAGS. Ser432, Ser434, and Ser465 each carry phosphoserine. A mediates XPO1-dependent nuclear export of WDR20-USP12 complexes region spans residues 450 to 468; sequence MDGAIASGVSKFATLSLHD.

In terms of assembly, interacts with USP12; promotes translocation of USP12/WDR20 to the plasma membrane. Component of the USP12/WDR20/WDR48 deubiquitinating complex. Interacts with USP46; contributes to the cytoplasmic localization of the USP46/WDR20 complex. Component of the USP12/DMWD/WDR48 deubiquitinating complex.

It is found in the cytoplasm. The protein localises to the nucleus. Its function is as follows. Regulator of deubiquitinating complexes. Activates deubiquitinating activity of complexes containing USP12. Anchors at the base of the ubiquitin-contacting loop of USP12 and remotely modulates the catalytic center of the enzyme. Regulates shuttling of the USP12 deubiquitinase complex between the plasma membrane, cytoplasm and nucleus. This Homo sapiens (Human) protein is WD repeat-containing protein 20 (WDR20).